The primary structure comprises 452 residues: Membrane-bound lytic murein transglycosylase D (452 aa).

Residues 1–15 (MKAKAILLASVLLVG) form the signal peptide. The N-palmitoyl cysteine moiety is linked to residue C16. C16 carries the S-diacylglycerol cysteine lipid modification. The slt-type domain stretch occupies residues 113–198 (NMPMELVLLP…LLTVAAYNSG (86 aa)). E125 is a catalytic residue. 2 consecutive LysM domains span residues 341–384 (RVYT…SLTI) and 400–448 (ITYR…KNNN).

This sequence belongs to the transglycosylase Slt family.

It is found in the cell membrane. It catalyses the reaction Exolytic cleavage of the (1-&gt;4)-beta-glycosidic linkage between N-acetylmuramic acid (MurNAc) and N-acetylglucosamine (GlcNAc) residues in peptidoglycan, from either the reducing or the non-reducing ends of the peptidoglycan chains, with concomitant formation of a 1,6-anhydrobond in the MurNAc residue.. Functionally, murein-degrading enzyme. May play a role in recycling of muropeptides during cell elongation and/or cell division. The protein is Membrane-bound lytic murein transglycosylase D (mltD) of Escherichia coli O6:H1 (strain CFT073 / ATCC 700928 / UPEC).